Reading from the N-terminus, the 124-residue chain is uncharacterized protein (124 aa).

This is an uncharacterized protein from Lactobacillus acidophilus.